A 124-amino-acid chain; its full sequence is Small ribosomal subunit protein bS16 (124 aa).

The disordered stretch occupies residues 82-124; sequence LAKRPARSNPTKAVPGKKAQERAAEAKQKAEDAAAAAAESAAE. A compositionally biased stretch (basic and acidic residues) spans 99–113; the sequence is KAQERAAEAKQKAED. Low complexity predominate over residues 114-124; that stretch reads AAAAAAESAAE.

This sequence belongs to the bacterial ribosomal protein bS16 family.

The chain is Small ribosomal subunit protein bS16 from Sinorhizobium fredii (strain NBRC 101917 / NGR234).